Here is a 211-residue protein sequence, read N- to C-terminus: N-(5'-phosphoribosyl)anthranilate isomerase (211 aa).

The protein belongs to the TrpF family.

The catalysed reaction is N-(5-phospho-beta-D-ribosyl)anthranilate = 1-(2-carboxyphenylamino)-1-deoxy-D-ribulose 5-phosphate. The protein operates within amino-acid biosynthesis; L-tryptophan biosynthesis; L-tryptophan from chorismate: step 3/5. The sequence is that of N-(5'-phosphoribosyl)anthranilate isomerase from Pseudomonas paraeruginosa (strain DSM 24068 / PA7) (Pseudomonas aeruginosa (strain PA7)).